Here is an 857-residue protein sequence, read N- to C-terminus: Gelation factor (857 aa).

Residue Met1 is modified to Blocked amino end (Met). The interval 1 to 250 is actin-binding; that stretch reads MAAAPSGKTW…EKKRRETSDA (250 aa). 2 consecutive Calponin-homology (CH) domains span residues 12–117 and 125–227; these read DVQK…LRYQ and NSPK…DYAL. A regulatory site region spans residues 229–246; the sequence is KEKRDADALAALEKKRRE. 6 Filamin repeats span residues 245–346, 347–446, 447–545, 546–645, 646–747, and 763–837; these read RETS…NVKI, DGSD…EVKI, LNSD…SIHI, KPAA…TVTV, KPAP…DVKC, and FTVA…KQVL. Residues 832–857 are disordered; it reads PFKQVLGNPGKKNPEVKSFTTTRTAN.

In terms of assembly, homodimer.

In terms of biological role, F-actin cross-linking protein. The chain is Gelation factor (abpC) from Dictyostelium discoideum (Social amoeba).